A 926-amino-acid chain; its full sequence is OTU domain-containing protein 7A (926 aa).

The segment at Pro75–Arg99 is disordered. Basic and acidic residues predominate over residues Arg82–Arg99. Residue Ser119 is modified to Phosphoserine. Residues Glu168 to Trp410 are TRAF-binding. The segment at Ala183–Thr449 is catalytic. Residues Leu199–Met374 form the OTU domain. Asp207 is a catalytic residue. Catalysis depends on Cys210, which acts as the Nucleophile. His367 acts as the Proton acceptor in catalysis. 3 disordered regions span residues Pro452–Ala514, Gly537–Lys613, and Glu668–Arg768. Residues Val481–Lys491 are compositionally biased toward low complexity. Basic and acidic residues predominate over residues Asn492 to Ala510. A Nuclear localization signal motif is present at residues Lys494–Arg509. 3 stretches are compositionally biased toward low complexity: residues Gly576–Thr592, Ala677–Ala691, and Pro729–Thr742. Omega-N-methylarginine is present on Arg880. Residues Gly884 to Arg919 form an A20-type zinc finger. Zn(2+) is bound by residues Cys890, Cys895, Cys907, and Cys910.

It belongs to the peptidase C64 family.

Its subcellular location is the cytoplasm. The protein localises to the nucleus. The enzyme catalyses Thiol-dependent hydrolysis of ester, thioester, amide, peptide and isopeptide bonds formed by the C-terminal Gly of ubiquitin (a 76-residue protein attached to proteins as an intracellular targeting signal).. Its function is as follows. Deubiquitinase, which cleaves 'Lys-11'-linked polyubiquitin chains. Might be required for PA28-20S proteasome assembly. The polypeptide is OTU domain-containing protein 7A (OTUD7A) (Homo sapiens (Human)).